The primary structure comprises 243 residues: Venom nerve growth factor 3 (243 aa).

The signal sequence occupies residues 1 to 18 (MSMLCYTLIIAFLIGIWA). Positions 19–125 (APKSEDNVPL…ALNRNIRAKR (107 aa)) are excised as a propeptide. The segment covering 47-66 (GLKTSRNTDQRHPAPKKAED) has biased composition (basic and acidic residues). The tract at residues 47 to 67 (GLKTSRNTDQRHPAPKKAEDQ) is disordered. 3 disulfide bridges follow: cysteine 139–cysteine 204, cysteine 182–cysteine 232, and cysteine 192–cysteine 234. Residues asparagine 148 and asparagine 151 are each glycosylated (N-linked (GlcNAc...) asparagine).

It belongs to the NGF-beta family. In terms of assembly, homodimer; non-covalently linked. In terms of tissue distribution, expressed by the venom gland.

The protein resides in the secreted. Nerve growth factor is important for the development and maintenance of the sympathetic and sensory nervous systems. It stimulates division and differentiation of sympathetic and embryonic sensory neurons as well as basal forebrain cholinergic neurons in the brain. Its relevance in the snake venom is not clear. However, it has been shown to inhibit metalloproteinase-dependent proteolysis of platelet glycoprotein Ib alpha, suggesting a metalloproteinase inhibition to prevent metalloprotease autodigestion and/or protection against prey proteases. Binds a lipid between the two protein chains in the homodimer. The lipid-bound form promotes histamine relase from mouse mast cells, contrary to the lipid-free form. In Tropidechis carinatus (Australian rough-scaled snake), this protein is Venom nerve growth factor 3.